A 265-amino-acid chain; its full sequence is Oxidoreductase nsrR (265 aa).

This sequence belongs to the avfA family.

It functions in the pathway secondary metabolite biosynthesis. Oxidoreductase; part of the gene cluster that mediates the biosynthesis of the tetrahydroxanthone dimer neosartorin, which exhibits antibacterial activity. The two different monomeric units appear to be synthesized by the same set of enzymes, among which the Baeyer-Villiger monooxygenase nsrF is the key enzyme for the divergence of the biosynthetic routes. The pathway begins with the synthesis of atrochrysone thioester by the polyketide synthase nsrB. The atrochrysone carboxyl ACP thioesterase nsrC then breaks the thioester bond and releases the atrochrysone carboxylic acid from AacuL. Atrochrysone carboxylic acid is decarboxylated by the decarboxylase nsrE, and oxidized by the anthrone oxygenase nsrD to yield emodin. Emodin is then reduced to emodin hydroquinone by the oxidoreductase nsrR. A-ring reduction by the short chain dehydrogenase nsrJ, dehydration by the scytalone dehydratase-like protein nsrI and probable spontaneous re-oxidation, results in overall deoxygenation to chrysophanol. The Baeyer-Villiger monooxygenase nsrF accepts chrysophanol as a substrate to insert one oxygen atom at two different positions to yield the precursors of both monomric units. NsrF is promiscuous/flexible in interacting with the 2 (non methylated and methylated) aromatic rings of chrysophanol, thus diverging the biosynthetic pathway at this point. After the hydrolysis of the lactones, methylesterification by the methyltransferase nsrG yields respectively moniliphenone and 2,2',6'-trihydroxy-4-methyl-6-methoxya-cyldiphenylmethanone. The next steps are the hydroxylation by the FAD-dependent monooxygenase nsrK, followed by isomerization by the monooxygenase nsrQ. The short chain dehydrogenase/reductase nsrO then catalyzes the C-5 ketoreduction to give the xanthone skeleton of blennolide C and 5-acetylblennolide A. The acetyltransferase nsrL has a strict substrate specificity and uses only blennolide A but not blennolide C to yield 5-acetylblennolide A as the single-acetylated product. In the final step of the biosynthesis, the heterodimerization of the 2 xanthones, blennolide C and 5-acetylblennolide A, is catalyzed by the cytochrome P450 monooxygenase nsrP. NsrP can utilize at least three different xanthones as its substrates to perform the dimerization reaction. The protein is Oxidoreductase nsrR of Aspergillus novofumigatus (strain IBT 16806).